We begin with the raw amino-acid sequence, 490 residues long: MVSSITRIQNYVIDGAATSNGLETVLESNFAPSLISLPATPLFGTDGIRGKVGELLSAPLALQIGFWAGVVLRNHADQLGPVILGQDSRNSSDMLAMALSAGLTAAGLEVWYLGLCPTPCVAYLTSMSEAIGGVMISASHNPPEDNGIKIFGANGGKLSQALQAEIEKGLRGNLPITSNVSNCGRHYSRWELVKNYGEALKRPWQNKVNLQGMKVVLDLAWGAAVGLAPSVFAEMGAEVISLHNAADGDRINVNCGSTHLEMLQAAVQEHNADLGFAFDGDADRVLAVDPTGRPVNGDYILYLWGLYLKQQNQLPDNLIVSTVMANLGFEKAWQQQGGKLIRTAVGDQYVQAEMIKTGAMLGGEQSGHILCSHYGMTGDGLLTALHLASLVKQSGVSLAELIDQSFQTYPQLLRNVRVVDRDRRLSWQNCTPVQQAIALAEKAMGDTGRILVRASGTEPVIRVMVEAANAELANYWTNELVAQVQQHLAP.

Catalysis depends on serine 139, which acts as the Phosphoserine intermediate. Mg(2+) contacts are provided by serine 139, aspartate 279, aspartate 281, and aspartate 283. At serine 139 the chain carries Phosphoserine.

Belongs to the phosphohexose mutase family. It depends on Mg(2+) as a cofactor. In terms of processing, activated by phosphorylation.

The catalysed reaction is alpha-D-glucosamine 1-phosphate = D-glucosamine 6-phosphate. Its function is as follows. Catalyzes the conversion of glucosamine-6-phosphate to glucosamine-1-phosphate. This chain is Phosphoglucosamine mutase, found in Nostoc sp. (strain PCC 7120 / SAG 25.82 / UTEX 2576).